Consider the following 505-residue polypeptide: Maturase K (505 aa).

The protein belongs to the intron maturase 2 family. MatK subfamily.

It is found in the plastid. It localises to the chloroplast. In terms of biological role, usually encoded in the trnK tRNA gene intron. Probably assists in splicing its own and other chloroplast group II introns. The polypeptide is Maturase K (Portulacaria afra (Elephant's food)).